The sequence spans 471 residues: Putative multidrug resistance protein MdtD (471 aa).

The Periplasmic segment spans residues Met1 to Gln11. A helical transmembrane segment spans residues Leu12–Ala32. At Leu33–His48 the chain is on the cytoplasmic side. The chain crosses the membrane as a helical span at residues Met49–Ala69. Over Asp70–Asn76 the chain is Periplasmic. A helical membrane pass occupies residues Ile77–Thr97. The Cytoplasmic portion of the chain corresponds to Leu98–Leu101. A helical membrane pass occupies residues Leu102–Met124. The Periplasmic segment spans residues Lys125–Thr137. The chain crosses the membrane as a helical span at residues Phe138 to Val158. At Glu159–His164 the chain is on the cytoplasmic side. Residues Trp165–Met185 form a helical membrane-spanning segment. Topologically, residues Pro186 to Asp196 are periplasmic. The helical transmembrane segment at Leu197–Ser217 threads the bilayer. Topologically, residues Lys218–Pro224 are cytoplasmic. Residues Leu225 to Ala245 form a helical membrane-spanning segment. Topologically, residues Gln246–Thr262 are periplasmic. A helical transmembrane segment spans residues Phe263 to Met283. The Cytoplasmic portion of the chain corresponds to Thr284–Pro285. Residues Val286–Met306 traverse the membrane as a helical segment. Residues Val307–Thr341 lie on the Periplasmic side of the membrane. Residues Leu342–Leu362 traverse the membrane as a helical segment. Over Gln363–Ser395 the chain is Cytoplasmic. The chain crosses the membrane as a helical span at residues Met396–Phe416. At Gly417 to Thr430 the chain is on the periplasmic side. The helical transmembrane segment at Val431–Ala451 threads the bilayer. The Cytoplasmic segment spans residues Arg452 to Gln471.

This sequence belongs to the major facilitator superfamily. TCR/Tet family.

It localises to the cell inner membrane. This chain is Putative multidrug resistance protein MdtD, found in Escherichia coli O81 (strain ED1a).